Reading from the N-terminus, the 449-residue chain is Aminopeptidase C (449 aa).

Catalysis depends on residues Cys-70, His-364, and Asn-385.

This sequence belongs to the peptidase C1 family. As to quaternary structure, homohexamer.

It is found in the cytoplasm. It carries out the reaction Inactivates bleomycin B2 (a cytotoxic glycometallopeptide) by hydrolysis of a carboxyamide bond of beta-aminoalanine, but also shows general aminopeptidase activity. The specificity varies somewhat with source, but amino acid arylamides of Met, Leu and Ala are preferred.. The sequence is that of Aminopeptidase C (pepC) from Lactobacillus delbrueckii subsp. lactis.